The sequence spans 417 residues: CinA-like protein (417 aa).

Belongs to the CinA family.

The sequence is that of CinA-like protein from Synechococcus sp. (strain RCC307).